We begin with the raw amino-acid sequence, 289 residues long: Inorganic pyrophosphatase (289 aa).

S2 is subject to N-acetylserine. K57 is modified (N6-acetyllysine). Mg(2+) is bound by residues D116, D121, and D153. K228 carries the N6-acetyllysine modification. S250 bears the Phosphoserine mark.

This sequence belongs to the PPase family. As to quaternary structure, homodimer. The cofactor is Mg(2+).

It localises to the cytoplasm. The catalysed reaction is diphosphate + H2O = 2 phosphate + H(+). The chain is Inorganic pyrophosphatase (PPA1) from Macaca fascicularis (Crab-eating macaque).